Here is a 781-residue protein sequence, read N- to C-terminus: Catenin beta-1 (781 aa).

Positions 34 to 56 (GIHSGATTTAPSLSGKGNPEDED) are disordered. 10 ARM repeats span residues 141–180 (NYQD…QLSK), 225–264 (REGL…NLLL), 267–306 (EGAK…ILAY), 351–390 (SSNK…NLSD), 391–429 (AATK…NLTC), 432–473 (YKNK…HLTS), 479–519 (EMAQ…NLAL), 521–562 (PANH…QFVE), 584–623 (IHNR…DVAQ), and 625–664 (KEAA…RMSE). Residues 735-745 (MDHDMGGHHPG) are compositionally biased toward basic and acidic residues. A disordered region spans residues 735–781 (MDHDMGGHHPGADYPVDGLPDLSHAQDLMDGLPPGDSNQLAWFDTDL).

It belongs to the beta-catenin family. Interacts with EP-Cadherin/CDH3. Interacts with custos; the interaction is positively regulated by Wnt stimulation. In terms of processing, phosphorylation by gsk3b promotes ubiquitination and subsequent degradation by the proteasome. Post-translationally, ubiquitinated when phosphorylated by gsk3b, leading to its degradation. In terms of tissue distribution, expressed at intercalated disks in the heart (at protein level).

It is found in the cytoplasm. The protein resides in the nucleus. Its subcellular location is the cell membrane. Its function is as follows. Key downstream component of the canonical Wnt signaling pathway. In the absence of Wnt, forms a complex with axin1, axin2, apc, csnk1a1 and gsk3b that promotes phosphorylation on N-terminal Ser and Thr residues and ubiquitination of ctnnb1 and its subsequent degradation by the proteasome. In the presence of Wnt ligand, ctnnb1 is not ubiquitinated and accumulates in the nucleus, where it acts as a coactivator for transcription factors of the TCF/LEF family, leading to activate Wnt responsive genes. Plays a key role in dorsoventral patterning: in prospective ventral blastomeres, its down-regulation by axin1 and axin2 leads to inhibit the Wnt signaling pathway, while in prospective dorsal blastomeres, degradation of axin results in stabilization and nuclear translocation of ctnnb1. The polypeptide is Catenin beta-1 (Xenopus laevis (African clawed frog)).